Here is an 87-residue protein sequence, read N- to C-terminus: Small ribosomal subunit protein bS20 (87 aa).

Positions Met-1–Arg-25 are disordered.

The protein belongs to the bacterial ribosomal protein bS20 family.

In terms of biological role, binds directly to 16S ribosomal RNA. In Baumannia cicadellinicola subsp. Homalodisca coagulata, this protein is Small ribosomal subunit protein bS20.